Consider the following 276-residue polypeptide: NH(3)-dependent NAD(+) synthetase (276 aa).

43–50 (GISGGVDS) is an ATP binding site. D49 lines the Mg(2+) pocket. Residue R146 coordinates deamido-NAD(+). Residue T166 coordinates ATP. E171 contributes to the Mg(2+) binding site. Deamido-NAD(+) is bound by residues K179 and D186. Residues K195 and T217 each coordinate ATP. Residue 266–267 (HK) coordinates deamido-NAD(+).

The protein belongs to the NAD synthetase family. In terms of assembly, homodimer.

The enzyme catalyses deamido-NAD(+) + NH4(+) + ATP = AMP + diphosphate + NAD(+) + H(+). It participates in cofactor biosynthesis; NAD(+) biosynthesis; NAD(+) from deamido-NAD(+) (ammonia route): step 1/1. Functionally, catalyzes the ATP-dependent amidation of deamido-NAD to form NAD. Uses ammonia as a nitrogen source. This Aliivibrio fischeri (strain MJ11) (Vibrio fischeri) protein is NH(3)-dependent NAD(+) synthetase.